Here is a 428-residue protein sequence, read N- to C-terminus: Probable dual-specificity RNA methyltransferase RlmN 2 (428 aa).

The active-site Proton acceptor is the Glu-142. One can recognise a Radical SAM core domain in the interval 148–414 (FAGRATACVS…STVRQRRGID (267 aa)). An intrachain disulfide couples Cys-155 to Cys-419. Residues Cys-162, Cys-166, and Cys-169 each coordinate [4Fe-4S] cluster. The span at 207 to 228 (MRDPSPGREAGEKSRDEADRHR) shows a compositional bias: basic and acidic residues. Residues 207–232 (MRDPSPGREAGEKSRDEADRHRAPPT) form a disordered region. Residues 244–245 (GE), Ser-276, 299–301 (SLH), and Asn-375 contribute to the S-adenosyl-L-methionine site. Cys-419 (S-methylcysteine intermediate) is an active-site residue.

The protein belongs to the radical SAM superfamily. RlmN family. [4Fe-4S] cluster serves as cofactor.

It is found in the cytoplasm. It carries out the reaction adenosine(2503) in 23S rRNA + 2 reduced [2Fe-2S]-[ferredoxin] + 2 S-adenosyl-L-methionine = 2-methyladenosine(2503) in 23S rRNA + 5'-deoxyadenosine + L-methionine + 2 oxidized [2Fe-2S]-[ferredoxin] + S-adenosyl-L-homocysteine. It catalyses the reaction adenosine(37) in tRNA + 2 reduced [2Fe-2S]-[ferredoxin] + 2 S-adenosyl-L-methionine = 2-methyladenosine(37) in tRNA + 5'-deoxyadenosine + L-methionine + 2 oxidized [2Fe-2S]-[ferredoxin] + S-adenosyl-L-homocysteine. Specifically methylates position 2 of adenine 2503 in 23S rRNA and position 2 of adenine 37 in tRNAs. The chain is Probable dual-specificity RNA methyltransferase RlmN 2 from Opitutus terrae (strain DSM 11246 / JCM 15787 / PB90-1).